A 238-amino-acid polypeptide reads, in one-letter code: IkB-like protein (238 aa).

ANK repeat units follow at residues 48–80 (GSSV…IINH), 87–118 (GNSA…TRIC), 124–153 (GMTP…PTQK), and 158–187 (GFTA…PLYM). Positions 80-86 (HHRRDND) match the Nuclear localization signal motif. A Nuclear localization signal motif is present at residues 202-213 (KKKPKIIITGCK). Positions 205-212 (PKIIITGC) match the PxIxITxC motif; Interaction with host PPP3CA motif. The FLCV motif signature appears at 227 to 230 (FLCV).

The protein belongs to the asfivirus A238L family. Interacts with host PPIA. Interacts with host PPP3CA/Calcineurin. Interacts with host RELA/p65; interaction of the 32 kDa form with host RELA results in the formation of a stable complex with NF-kappa-B. Interacts with host PPP3R1. Interacts with host EP300; this interaction inhibits the association of host EP300 with host RELA, JUN and NFATC2. In terms of processing, the protein exists in a 28 kDa and a 32 kDa form, probably due to post-translational modifications which are neither phosphorylation, nor sumoylation.

Its subcellular location is the host nucleus. It is found in the host cytoplasm. In terms of biological role, ikB-like protein that inhibits the binding of NF-kappa-B to DNA, thereby downregulating pro-inflammatory cytokine production. Forms a heterodimer with the NF-kappa-B subunit RELA/p65 and prevents the activation of the NF-kappa-B transcription factor. Inhibits calcineurin function, which is required for the induction of nuclear factor of activated T cells (NFAT)-dependent immune response genes. Prevents the binding of substrates to calcineurin without affecting the phosphatase activity. Does not contain the serine residues that are phosphorylated by host IkB kinase and thus is not degraded following stimulation of the NFkB pathway. The polypeptide is IkB-like protein (A238L) (Ornithodoros (relapsing fever ticks)).